A 464-amino-acid chain; its full sequence is GTPase Der (464 aa).

EngA-type G domains are found at residues 3–166 (PTIA…AVES) and 177–350 (LKMA…QAAT). GTP-binding positions include 9 to 16 (GRPNVGKS), 56 to 60 (DTGGI), 118 to 121 (NKVD), 183 to 190 (GRPNVGKS), 230 to 234 (DTAGV), and 295 to 298 (NKWD). The region spanning 351-435 (EKYSTSFLTR…PVRIEYRSGD (85 aa)) is the KH-like domain.

This sequence belongs to the TRAFAC class TrmE-Era-EngA-EngB-Septin-like GTPase superfamily. EngA (Der) GTPase family. As to quaternary structure, associates with the 50S ribosomal subunit.

GTPase that plays an essential role in the late steps of ribosome biogenesis. This chain is GTPase Der, found in Teredinibacter turnerae (strain ATCC 39867 / T7901).